A 232-amino-acid polypeptide reads, in one-letter code: 5'-methylthioadenosine/S-adenosylhomocysteine nucleosidase (232 aa).

Glutamate 12 functions as the Proton acceptor in the catalytic mechanism. Substrate-binding positions include glycine 78, valine 152, and 173–174; that span reads ME. The Proton donor role is filled by aspartate 197.

Belongs to the PNP/UDP phosphorylase family. MtnN subfamily. As to quaternary structure, homodimer.

It carries out the reaction S-adenosyl-L-homocysteine + H2O = S-(5-deoxy-D-ribos-5-yl)-L-homocysteine + adenine. The enzyme catalyses S-methyl-5'-thioadenosine + H2O = 5-(methylsulfanyl)-D-ribose + adenine. The catalysed reaction is 5'-deoxyadenosine + H2O = 5-deoxy-D-ribose + adenine. Its pathway is amino-acid biosynthesis; L-methionine biosynthesis via salvage pathway; S-methyl-5-thio-alpha-D-ribose 1-phosphate from S-methyl-5'-thioadenosine (hydrolase route): step 1/2. Catalyzes the irreversible cleavage of the glycosidic bond in both 5'-methylthioadenosine (MTA) and S-adenosylhomocysteine (SAH/AdoHcy) to adenine and the corresponding thioribose, 5'-methylthioribose and S-ribosylhomocysteine, respectively. Also cleaves 5'-deoxyadenosine, a toxic by-product of radical S-adenosylmethionine (SAM) enzymes, into 5-deoxyribose and adenine. Thus, is required for in vivo function of the radical SAM enzymes biotin synthase and lipoic acid synthase, that are inhibited by 5'-deoxyadenosine accumulation. The sequence is that of 5'-methylthioadenosine/S-adenosylhomocysteine nucleosidase from Buchnera aphidicola subsp. Acyrthosiphon pisum (strain APS) (Acyrthosiphon pisum symbiotic bacterium).